We begin with the raw amino-acid sequence, 251 residues long: tRNA (guanine-N(1)-)-methyltransferase (251 aa).

S-adenosyl-L-methionine-binding positions include G111 and 131 to 136; that span reads LGDFVL.

This sequence belongs to the RNA methyltransferase TrmD family. In terms of assembly, homodimer.

The protein localises to the cytoplasm. The catalysed reaction is guanosine(37) in tRNA + S-adenosyl-L-methionine = N(1)-methylguanosine(37) in tRNA + S-adenosyl-L-homocysteine + H(+). Its function is as follows. Specifically methylates guanosine-37 in various tRNAs. The polypeptide is tRNA (guanine-N(1)-)-methyltransferase (Synechococcus sp. (strain JA-2-3B'a(2-13)) (Cyanobacteria bacterium Yellowstone B-Prime)).